The following is a 147-amino-acid chain: Heavy metal-dependent transcription regulator 2 (147 aa).

The region spanning 1-69 is the HTH merR-type domain; it reads MNIGEASKTS…VEQIKELLAL (69 aa). A DNA-binding region (H-T-H motif) is located at residues 3–22; that stretch reads IGEASKTSGVSSKMIRYYEQ.

It is found in the cytoplasm. Functionally, transcriptional regulator involved in acid tolerance. Binds copper. The protein is Heavy metal-dependent transcription regulator 2 (hmrR2) of Rhizobium meliloti (strain 1021) (Ensifer meliloti).